A 76-amino-acid polypeptide reads, in one-letter code: Protein krueppel (76 aa).

2 consecutive C2H2-type zinc fingers follow at residues 11-33 (FECS…LRLH) and 39-61 (YSCP…LRVH).

This sequence belongs to the krueppel C2H2-type zinc-finger protein family.

Its subcellular location is the nucleus. Krueppel is a gap class segmentation protein. The polypeptide is Protein krueppel (Kr) (Manduca sexta (Tobacco hawkmoth)).